A 482-amino-acid polypeptide reads, in one-letter code: tRNA sulfurtransferase (482 aa).

Residues 61-165 (LAIRDALTRI…DDRLLLIKGR (105 aa)) enclose the THUMP domain. ATP contacts are provided by residues 183 to 184 (LI), K265, G287, and Q296. The cysteines at positions 344 and 456 are disulfide-linked. The 79-residue stretch at 404-482 (FGPNDVILDI…GFNNVKVYRP (79 aa)) folds into the Rhodanese domain. C456 acts as the Cysteine persulfide intermediate in catalysis.

It belongs to the ThiI family.

It is found in the cytoplasm. The catalysed reaction is [ThiI sulfur-carrier protein]-S-sulfanyl-L-cysteine + a uridine in tRNA + 2 reduced [2Fe-2S]-[ferredoxin] + ATP + H(+) = [ThiI sulfur-carrier protein]-L-cysteine + a 4-thiouridine in tRNA + 2 oxidized [2Fe-2S]-[ferredoxin] + AMP + diphosphate. It carries out the reaction [ThiS sulfur-carrier protein]-C-terminal Gly-Gly-AMP + S-sulfanyl-L-cysteinyl-[cysteine desulfurase] + AH2 = [ThiS sulfur-carrier protein]-C-terminal-Gly-aminoethanethioate + L-cysteinyl-[cysteine desulfurase] + A + AMP + 2 H(+). Its pathway is cofactor biosynthesis; thiamine diphosphate biosynthesis. Its function is as follows. Catalyzes the ATP-dependent transfer of a sulfur to tRNA to produce 4-thiouridine in position 8 of tRNAs, which functions as a near-UV photosensor. Also catalyzes the transfer of sulfur to the sulfur carrier protein ThiS, forming ThiS-thiocarboxylate. This is a step in the synthesis of thiazole, in the thiamine biosynthesis pathway. The sulfur is donated as persulfide by IscS. This chain is tRNA sulfurtransferase, found in Escherichia coli O127:H6 (strain E2348/69 / EPEC).